Here is a 194-residue protein sequence, read N- to C-terminus: Thymidine kinase (194 aa).

Residues 9–16 (GAMNSGKT) and 85–88 (DECQ) contribute to the ATP site. Catalysis depends on Glu86, which acts as the Proton acceptor. Zn(2+) contacts are provided by Cys143, Cys146, Cys180, and His183.

It belongs to the thymidine kinase family. Homotetramer.

It is found in the cytoplasm. It carries out the reaction thymidine + ATP = dTMP + ADP + H(+). This Enterococcus faecalis (strain ATCC 700802 / V583) protein is Thymidine kinase.